The chain runs to 328 residues: dITP/XTP pyrophosphatase (328 aa).

A unknown region spans residues 1–129; it reads MSEKIYEYKD…ATSEQGFGDT (129 aa). Residues 130–324 form an NTP pyrophosphatase region; sequence ILIATRNEGK…KLMEVFPAWQ (195 aa). 134–139 lines the substrate pocket; it reads TRNEGK. The active-site Proton acceptor is the Asp-196. Position 196 (Asp-196) interacts with Mg(2+). Substrate contacts are provided by residues Ser-197, 280–283, Lys-303, and 308–309; these read FGYD and HR.

The protein belongs to the HAM1 NTPase family. Homodimer. Mg(2+) serves as cofactor.

The enzyme catalyses XTP + H2O = XMP + diphosphate + H(+). It carries out the reaction dITP + H2O = dIMP + diphosphate + H(+). The catalysed reaction is ITP + H2O = IMP + diphosphate + H(+). In terms of biological role, pyrophosphatase that catalyzes the hydrolysis of nucleoside triphosphates to their monophosphate derivatives, with a high preference for the non-canonical purine nucleotides XTP (xanthosine triphosphate), dITP (deoxyinosine triphosphate) and ITP. Seems to function as a house-cleaning enzyme that removes non-canonical purine nucleotides from the nucleotide pool, thus preventing their incorporation into DNA/RNA and avoiding chromosomal lesions. This Streptococcus pyogenes serotype M6 (strain ATCC BAA-946 / MGAS10394) protein is dITP/XTP pyrophosphatase.